The following is a 402-amino-acid chain: 2-pyrone synthase (402 aa).

8 residues coordinate acetoacetyl-CoA: Lys-60, Arg-63, Cys-169, Leu-272, Arg-274, Gly-310, Arg-312, and Ala-313. Cys-169 is a catalytic residue.

Belongs to the thiolase-like superfamily. Chalcone/stilbene synthases family. As to expression, expressed in both vegetative and reproductive organs. The expression is strong in the leaf, scape (the inflorescence stem) and corolla (both in the ligule and the unpigmented tube), moderate in the bract and carpel, detectable in the root and pappus but not detectable in the stamen.

The enzyme catalyses 2 malonyl-CoA + acetyl-CoA + 2 H(+) = triacetate lactone + 2 CO2 + 3 CoA. In terms of biological role, polyketide synthase, which uses acetyl-CoA and two condensation reactions with malonyl-CoA to form triacetic acid lactone (also called methylpyrone), a precursor of phytoalexin. May participate in insect and pathogen resistance. The sequence is that of 2-pyrone synthase from Gerbera hybrida (Daisy).